Reading from the N-terminus, the 450-residue chain is 5-amino-6-(D-ribitylamino)uracil--L-tyrosine 4-hydroxyphenyl transferase (450 aa).

Residues 1-24 form a disordered region; that stretch reads MPDVPETVGTPDGSTEFEHRPTTD. The Radical SAM core domain maps to 82 to 350; sequence VTFVANLNNN…MIAVSRLFLD (269 aa). Cysteine 96, cysteine 100, and cysteine 103 together coordinate [4Fe-4S] cluster. A disordered region spans residues 430 to 450; the sequence is PDADVLGPQLGPRADGTPLLD.

Belongs to the radical SAM superfamily. CofH family. In terms of assembly, consists of two subunits, CofG and CofH. [4Fe-4S] cluster is required as a cofactor.

It carries out the reaction 5-amino-6-(D-ribitylamino)uracil + L-tyrosine + S-adenosyl-L-methionine = 5-amino-5-(4-hydroxybenzyl)-6-(D-ribitylimino)-5,6-dihydrouracil + 2-iminoacetate + 5'-deoxyadenosine + L-methionine + H(+). The protein operates within cofactor biosynthesis; coenzyme F0 biosynthesis. Its function is as follows. Catalyzes the radical-mediated synthesis of 5-amino-5-(4-hydroxybenzyl)-6-(D-ribitylimino)-5,6-dihydrouracil from 5-amino-6-(D-ribitylamino)uracil and L-tyrosine. The polypeptide is 5-amino-6-(D-ribitylamino)uracil--L-tyrosine 4-hydroxyphenyl transferase (Haloarcula marismortui (strain ATCC 43049 / DSM 3752 / JCM 8966 / VKM B-1809) (Halobacterium marismortui)).